The sequence spans 908 residues: DNA mismatch repair protein MutS (908 aa).

ATP is bound at residue 659–666 (GPNMAGKS).

The protein belongs to the DNA mismatch repair MutS family.

Its function is as follows. This protein is involved in the repair of mismatches in DNA. It is possible that it carries out the mismatch recognition step. This protein has a weak ATPase activity. This chain is DNA mismatch repair protein MutS, found in Parvibaculum lavamentivorans (strain DS-1 / DSM 13023 / NCIMB 13966).